Reading from the N-terminus, the 291-residue chain is Light-independent protochlorophyllide reductase iron-sulfur ATP-binding protein (291 aa).

Residues 10-15 (GIGKST) and Lys-39 contribute to the ATP site. Residue Ser-14 coordinates Mg(2+). [4Fe-4S] cluster contacts are provided by Cys-95 and Cys-129. 180–181 (NR) lines the ATP pocket.

Belongs to the NifH/BchL/ChlL family. As to quaternary structure, homodimer. Protochlorophyllide reductase is composed of three subunits; ChlL, ChlN and ChlB. [4Fe-4S] cluster serves as cofactor.

It localises to the plastid. The protein resides in the chloroplast. The catalysed reaction is chlorophyllide a + oxidized 2[4Fe-4S]-[ferredoxin] + 2 ADP + 2 phosphate = protochlorophyllide a + reduced 2[4Fe-4S]-[ferredoxin] + 2 ATP + 2 H2O. The protein operates within porphyrin-containing compound metabolism; chlorophyll biosynthesis (light-independent). Component of the dark-operative protochlorophyllide reductase (DPOR) that uses Mg-ATP and reduced ferredoxin to reduce ring D of protochlorophyllide (Pchlide) to form chlorophyllide a (Chlide). This reaction is light-independent. The L component serves as a unique electron donor to the NB-component of the complex, and binds Mg-ATP. In Larix decidua (European larch), this protein is Light-independent protochlorophyllide reductase iron-sulfur ATP-binding protein.